The following is a 632-amino-acid chain: Golgin subfamily A member 8H (632 aa).

The segment at 1–77 (MAEETQHNKL…SSATLKDLES (77 aa)) is disordered. Coiled coils occupy residues 110 to 201 (VEHQ…LSSR) and 240 to 468 (ECAE…EKAD). Basic and acidic residues-rich tracts occupy residues 352-362 (KQEERIQEQHK) and 427-440 (HGGE…EEAP). 3 disordered regions span residues 352–379 (KQEE…EPNN), 423–452 (PGEG…DPES), and 496–524 (LSEP…DEGE). Residues 508 to 520 (LGGGHHQAGAQGG) show a composition bias toward gly residues.

The protein belongs to the GOLGA8 family.

The polypeptide is Golgin subfamily A member 8H (GOLGA8H) (Homo sapiens (Human)).